Reading from the N-terminus, the 485-residue chain is Adenosylhomocysteinase (485 aa).

3 residues coordinate substrate: T60, D146, and E208. 209-211 provides a ligand contact to NAD(+); that stretch reads TTT. Positions 238 and 242 each coordinate substrate. NAD(+) contacts are provided by residues N243, 272–277, E295, N330, 351–353, and N399; these read GYGDVG and IGH.

Belongs to the adenosylhomocysteinase family. It depends on NAD(+) as a cofactor.

Its subcellular location is the cytoplasm. The catalysed reaction is S-adenosyl-L-homocysteine + H2O = L-homocysteine + adenosine. Its pathway is amino-acid biosynthesis; L-homocysteine biosynthesis; L-homocysteine from S-adenosyl-L-homocysteine: step 1/1. Functionally, may play a key role in the regulation of the intracellular concentration of adenosylhomocysteine. In Streptomyces avermitilis (strain ATCC 31267 / DSM 46492 / JCM 5070 / NBRC 14893 / NCIMB 12804 / NRRL 8165 / MA-4680), this protein is Adenosylhomocysteinase.